A 173-amino-acid chain; its full sequence is Ribosome maturation factor RimM (173 aa).

Positions 78 to 157 (EEEFYLADLI…VLVVPPEEVE (80 aa)) constitute a PRC barrel domain. A disordered region spans residues 152–173 (PPEEVEAQEPPEKDAGGDEPSP).

It belongs to the RimM family. In terms of assembly, binds ribosomal protein uS19.

The protein resides in the cytoplasm. In terms of biological role, an accessory protein needed during the final step in the assembly of 30S ribosomal subunit, possibly for assembly of the head region. Essential for efficient processing of 16S rRNA. May be needed both before and after RbfA during the maturation of 16S rRNA. It has affinity for free ribosomal 30S subunits but not for 70S ribosomes. The polypeptide is Ribosome maturation factor RimM (Beijerinckia indica subsp. indica (strain ATCC 9039 / DSM 1715 / NCIMB 8712)).